The sequence spans 800 residues: MLISNEWLKEYVTIDDSVSNLAERITRTGIEVDDLIDYTKDIKNLVVGFVKSKEKHPDADKLNVCQVDIGEDEPVQIVCGAPNVDAGQYVIVAKVGGRLPGGIKIKRAKLRGERSEGMICSLQEIGISSNYIPKSFESGIYVFSEAQVPGTDALQALYLDDQVMEFDLTPNRADALSMIGTAYEVAALYNTKMTKPETTSNELDLSANDELTVTIENEDKVPYYSARVVHDVTIEPSPIWMQARLIKAGIRPINNVVDISNYVLLEYGQPLHMFDQDAIGSQQIVVRQANEGEKMTTLDDTERELLTSDIVITNGQTPIALAGVMGGDFSEVKEQTSNIVIEGAIFDPVSIRHTSRRLNLRSESSSRFEKGIATEFVDEAVDRACYLLQTYANGKVLKDRVSSGELGAFITPIDITADKINRTIGFDLSQNDIVTIFNQLGFDTEINDDVITVLVPSRRKDITIKEDLIEEVARIYGYDDIPSTLPVFDKVTSGQLTDRQYKTRMVKEVLEGAGLDQAITYSLVSKEDATAFSMQQRQTIDLLMPMSEAHASLRQSLLPHLIEAASYNVARKNKDVKLFEIGNVFFANGEGELPDQVEYLSGILTGDYVVNQWQGKKETVDFYLAKGVVDRVSEKLNLEFSYRRADIDGLHPGRTAEILLENKVVGFIGELHPILAADNDLKRTYVFELNFDALMAVSVGYINYQPIPRFPGMSRDIALEVDQNIPAADLLSTIHAHGGNILKDTLVFDVYQGEHLEKGKKSIAIRLNYLDTEETLTDERVSKVQAEIEAALIEQGAVIR.

The region spanning 39–154 is the tRNA-binding domain; that stretch reads TKDIKNLVVG…EAQVPGTDAL (116 aa). Positions 408–483 constitute a B5 domain; that stretch reads AFITPIDITA…RIYGYDDIPS (76 aa). Asp-461, Asp-467, Glu-470, and Glu-471 together coordinate Mg(2+). An FDX-ACB domain is found at 708-800; it reads PRFPGMSRDI…ALIEQGAVIR (93 aa).

Belongs to the phenylalanyl-tRNA synthetase beta subunit family. Type 1 subfamily. Tetramer of two alpha and two beta subunits. Requires Mg(2+) as cofactor.

The protein resides in the cytoplasm. It carries out the reaction tRNA(Phe) + L-phenylalanine + ATP = L-phenylalanyl-tRNA(Phe) + AMP + diphosphate + H(+). The chain is Phenylalanine--tRNA ligase beta subunit from Staphylococcus aureus (strain COL).